A 424-amino-acid polypeptide reads, in one-letter code: Inositol phosphosphingolipids phospholipase C (424 aa).

E49 serves as a coordination point for Mg(2+). The Proton acceptor role is filled by H289. The next 2 membrane-spanning stretches (helical) occupy residues 335–357 (LRIAHLLISIPLIIGVHVAIAWC) and 364–386 (VIILFFTVMLTIAAVVNGFCIGL).

Belongs to the neutral sphingomyelinase family. Mg(2+) serves as cofactor.

It localises to the cell membrane. The protein resides in the endoplasmic reticulum membrane. Its pathway is lipid metabolism; sphingolipid metabolism. Functionally, inositol phosphosphingolipids phospholipase essential for the coordination of cell wall formation. Responsible for the hydrolysis of the phosphosphingolipids (IPS), inositol phosphorylceramide (IPC), mannosylinositol phosphorylceramide (MIPC), and mannosyldiinositol phosphorylceramide (M(IP)2C). This chain is Inositol phosphosphingolipids phospholipase C (css1), found in Schizosaccharomyces pombe (strain 972 / ATCC 24843) (Fission yeast).